The following is a 437-amino-acid chain: Protein translocase subunit SecY (437 aa).

Helical transmembrane passes span 19–39 (LFTLGIIVVYRLGTHIPIPGV), 69–89 (LLQITVFALGIMPYITASIIL), 122–142 (VALAILQGTGLVATARSGALF), 157–177 (IFTTVVMVICMTAGTCVVMWL), 189–209 (GMSILMFISIAATFPSALWAI), 219–239 (WIEFGTVILVGLVMVGLVVFV), 275–295 (GVIPVIFASSLLYIPALIVQF), 318–338 (HIILYFFLIVFFAFFYVAISF), 378–398 (GSLYLGLIALVPTMALAGFGA), and 400–420 (QNFPFGGTSILIIVGVGLETV).

This sequence belongs to the SecY/SEC61-alpha family. In terms of assembly, component of the Sec protein translocase complex. Heterotrimer consisting of SecY, SecE and SecG subunits. The heterotrimers can form oligomers, although 1 heterotrimer is thought to be able to translocate proteins. Interacts with the ribosome. Interacts with SecDF, and other proteins may be involved. Interacts with SecA.

It is found in the cell membrane. In terms of biological role, the central subunit of the protein translocation channel SecYEG. Consists of two halves formed by TMs 1-5 and 6-10. These two domains form a lateral gate at the front which open onto the bilayer between TMs 2 and 7, and are clamped together by SecE at the back. The channel is closed by both a pore ring composed of hydrophobic SecY resides and a short helix (helix 2A) on the extracellular side of the membrane which forms a plug. The plug probably moves laterally to allow the channel to open. The ring and the pore may move independently. This Streptomyces coelicolor (strain ATCC BAA-471 / A3(2) / M145) protein is Protein translocase subunit SecY.